The sequence spans 214 residues: Adenylate kinase (214 aa).

10-15 contacts ATP; it reads GAGKGT. The segment at 30–59 is NMP; it reads STGDMLRAAVKAGTPLGLEAKKVMDAGQLV. AMP is bound by residues Thr31, Arg36, 57–59, 85–88, and Gln92; these read QLV and GFPR. The interval 122-159 is LID; it reads GRRVHPGSGRVYHIVYNPPKVEGKDDVTGEDLAIRPDD. Residues Arg123 and 132-133 each bind ATP; that span reads VY. Residues Arg156 and Arg167 each coordinate AMP. Gln200 lines the ATP pocket.

It belongs to the adenylate kinase family. In terms of assembly, monomer.

It is found in the cytoplasm. The catalysed reaction is AMP + ATP = 2 ADP. The protein operates within purine metabolism; AMP biosynthesis via salvage pathway; AMP from ADP: step 1/1. Functionally, catalyzes the reversible transfer of the terminal phosphate group between ATP and AMP. Plays an important role in cellular energy homeostasis and in adenine nucleotide metabolism. The sequence is that of Adenylate kinase from Shewanella loihica (strain ATCC BAA-1088 / PV-4).